The sequence spans 702 residues: MA3 DOMAIN-CONTAINING TRANSLATION REGULATORY FACTOR 3 (702 aa).

Positions 1-100 (MEGFLTDQQR…PNDPNYDSGE (100 aa)) are disordered. Over residues 53–65 (VKHRRSHAGRSIR) the composition is skewed to basic residues. Over residues 81–91 (IDTDGDYHIDP) the composition is skewed to basic and acidic residues. The MI 1 domain maps to 116–237 (DYKKAAASII…PPAFLPRAAK (122 aa)). The short motif at 267-274 (ERRWGGQT) is the Nuclear localization signal 1 element. 3 MI domains span residues 280–401 (EVKK…PSGE), 414–535 (RFKE…EISS), and 577–697 (DAKD…SLTE). Positions 615 to 622 (VKKALVMG) match the Nuclear localization signal 2 motif.

This sequence belongs to the PDCD4 family. Interacts with EIN2, ETR2 and EIN4. Binds to EIF4A1. The association with ribosomes is modulated by cellular energy status and TOR activity. As to expression, mostly expressed in vegetative tissues, such as leaves and stems, and, to a lower extent, in roots and reproductive tissues, such as flower buds and flowers. Expressed in seedlings, roots, cauline leaf tips and flowers.

The protein resides in the nucleus. The protein localises to the cytoplasm. Its subcellular location is the cytosol. Its function is as follows. Involved in target of rapamycin (TOR)-regulated translation control, especially under energy-deficient conditions. Involved in the regulation of the ethylene-mediated signaling pathway. Involved in salt stress responses. Reduced cotyledons size and early flowering. In Arabidopsis thaliana (Mouse-ear cress), this protein is MA3 DOMAIN-CONTAINING TRANSLATION REGULATORY FACTOR 3.